The chain runs to 312 residues: Malate dehydrogenase (312 aa).

Residues 12–17 and Asp-36 contribute to the NAD(+) site; that span reads GAGFTG. The substrate site is built by Arg-87 and Arg-93. NAD(+) contacts are provided by residues Asn-100 and 123-125; that span reads LTN. A substrate-binding site is contributed by Asn-125. Ser-149 bears the Phosphoserine mark. Arg-156 is a substrate binding site. Catalysis depends on His-180, which acts as the Proton acceptor.

Belongs to the LDH/MDH superfamily. MDH type 3 family.

The catalysed reaction is (S)-malate + NAD(+) = oxaloacetate + NADH + H(+). Functionally, catalyzes the reversible oxidation of malate to oxaloacetate. The polypeptide is Malate dehydrogenase (Geobacillus kaustophilus (strain HTA426)).